A 507-amino-acid polypeptide reads, in one-letter code: Glutamate--tRNA ligase (507 aa).

A 'HIGH' region motif is present at residues 14–24; the sequence is PSPTGPLHIGG. The short motif at 262–266 is the 'KMSKS' region element; it reads KLSKR. An ATP-binding site is contributed by K265.

The protein belongs to the class-I aminoacyl-tRNA synthetase family. Glutamate--tRNA ligase type 1 subfamily. In terms of assembly, monomer.

It is found in the cytoplasm. The enzyme catalyses tRNA(Glu) + L-glutamate + ATP = L-glutamyl-tRNA(Glu) + AMP + diphosphate. Functionally, catalyzes the attachment of glutamate to tRNA(Glu) in a two-step reaction: glutamate is first activated by ATP to form Glu-AMP and then transferred to the acceptor end of tRNA(Glu). This is Glutamate--tRNA ligase from Porphyromonas gingivalis (strain ATCC 33277 / DSM 20709 / CIP 103683 / JCM 12257 / NCTC 11834 / 2561).